The sequence spans 583 residues: Protein cps3 (583 aa).

C3H1-type zinc fingers lie at residues 35–62 and 64–91; these read SLQH…HDLE and ATEK…HVLP. Disordered stretches follow at residues 318–346, 471–490, and 504–532; these read LGRP…NGST, KVSS…YNGT, and RQES…KNLG. Polar residues-rich tracts occupy residues 323 to 334, 475 to 490, and 513 to 532; these read KSPSVPTSVGSN, NLNS…YNGT, and PSLN…KNLG.

Its subcellular location is the cytoplasm. In terms of biological role, responsible for supersensitivity to the spindle poison, isopropyl N-3-chlorophenyl carbamate. Has a role in meiosis. This chain is Protein cps3 (cps3), found in Schizosaccharomyces pombe (strain 972 / ATCC 24843) (Fission yeast).